A 1361-amino-acid polypeptide reads, in one-letter code: Xanthine dehydrogenase 1 (1361 aa).

The 2Fe-2S ferredoxin-type domain maps to 15 to 101 (TEALLYVNGV…GMHVISIEGL (87 aa)). [2Fe-2S] cluster-binding residues include cysteine 53, cysteine 58, cysteine 61, cysteine 83, cysteine 123, cysteine 126, cysteine 159, and cysteine 161. Residues 257 to 442 (RGNGGITWYR…LSVFLPWTRP (186 aa)) enclose the FAD-binding PCMH-type domain. Residues 285–292 (LLVGNTEV), phenylalanine 365, 375–379 (CIGGN), aspartate 388, leucine 432, and lysine 450 each bind FAD. Mo-molybdopterin-binding residues include glutamine 796 and phenylalanine 827. Glutamate 831 and arginine 909 together coordinate substrate. Arginine 941 contacts Mo-molybdopterin. Substrate contacts are provided by phenylalanine 943 and threonine 1039. Mo-molybdopterin is bound at residue alanine 1108. Glutamate 1297 (proton acceptor) is an active-site residue.

The protein belongs to the xanthine dehydrogenase family. In terms of assembly, homodimer. [2Fe-2S] cluster serves as cofactor. It depends on FAD as a cofactor. Mo-molybdopterin is required as a cofactor. Expressed in roots, leaves, stems, flowers and siliques.

It carries out the reaction xanthine + NAD(+) + H2O = urate + NADH + H(+). The catalysed reaction is hypoxanthine + NAD(+) + H2O = xanthine + NADH + H(+). In terms of biological role, key enzyme involved in purine catabolism. Catalyzes the oxidation of hypoxanthine to xanthine and the oxidation of xanthine to urate. Regulates the level of ureides and plays an important role during plant growth and development, senescence and response to stresses. Possesses NADH oxidase activity and may contribute to the generation of superoxide anions in planta. The polypeptide is Xanthine dehydrogenase 1 (XDH1) (Arabidopsis thaliana (Mouse-ear cress)).